A 190-amino-acid chain; its full sequence is MKASYFLASKYAQALLGTLEEKGEISRLDEYVEAFQRLKKALESSESLRDMVYSPLIPPKHIVSRMKDVSEFDDTIFVQFLEVLADKRRQNLIPFMSHILYQESLEREKVVEVRLVLPNEVSNTIINQVKQAIQNKTGRKIKLRTQFNEDLIGGLQLYIGDKFFDYSVKGFLQDIQSAYAPIGGGEIFES.

Belongs to the ATPase delta chain family. F-type ATPases have 2 components, F(1) - the catalytic core - and F(0) - the membrane proton channel. F(1) has five subunits: alpha(3), beta(3), gamma(1), delta(1), epsilon(1). F(0) has three main subunits: a(1), b(2) and c(10-14). The alpha and beta chains form an alternating ring which encloses part of the gamma chain. F(1) is attached to F(0) by a central stalk formed by the gamma and epsilon chains, while a peripheral stalk is formed by the delta and b chains.

Its subcellular location is the cell inner membrane. Functionally, f(1)F(0) ATP synthase produces ATP from ADP in the presence of a proton or sodium gradient. F-type ATPases consist of two structural domains, F(1) containing the extramembraneous catalytic core and F(0) containing the membrane proton channel, linked together by a central stalk and a peripheral stalk. During catalysis, ATP synthesis in the catalytic domain of F(1) is coupled via a rotary mechanism of the central stalk subunits to proton translocation. This protein is part of the stalk that links CF(0) to CF(1). It either transmits conformational changes from CF(0) to CF(1) or is implicated in proton conduction. The protein is ATP synthase subunit delta of Petrotoga mobilis (strain DSM 10674 / SJ95).